Consider the following 426-residue polypeptide: Inositol hexakisphosphate kinase 2 (426 aa).

ATP contacts are provided by residues 207–209 (ENL) and Asp-220. Residues Lys-222 and 236-243 (KAANQIRK) contribute to the substrate site. Residue Asp-383 coordinates ATP. Residue His-386 coordinates substrate.

Belongs to the inositol phosphokinase (IPK) family.

The protein localises to the nucleus. The catalysed reaction is 1D-myo-inositol hexakisphosphate + ATP = 5-diphospho-1D-myo-inositol 1,2,3,4,6-pentakisphosphate + ADP. It participates in phospholipid metabolism; phosphatidylinositol metabolism. Inhibited by flavonoids, including myricetin, quercetin, luteolin, isorhamnetin, rhamnetin, kaempferol, diosmetin and apigenin. Its function is as follows. Converts inositol hexakisphosphate (InsP6) to diphosphoinositol pentakisphosphate (InsP7/PP-InsP5). This Homo sapiens (Human) protein is Inositol hexakisphosphate kinase 2.